We begin with the raw amino-acid sequence, 488 residues long: MTAEQLPPELQRVHMVGIGGAGMAGIARILLDRGGLVSGSDAKESRGVHALRARGALIRIGHDASALDLLPGGVTSVITTHAAIPKTNPELVEARRRGVPVMLRPVVLAKLMDGRITVMVTGTHGKTTTTSMAIVALQHCGRDPSFAVGGELGEAGTNAHHGSGDYFVAEADESDGSLLEYTPHVAVVTNIEADHLDFYGSTEAYVGVFDAFVERLAPGGALVVCADDPGSAALAERSAELGIRVLRYGSAGHAGAALAATLVSWEQRGTGAVAQIQLAGEADPRSMRLSVPGRHMALNVLGALLAAIEVGAPVGEVLDGLAGFEGVRRRFELVGTAESVRVFDDYAHHPTEVRATLEAVRSVVRQSGSGRLLVVFQPHLYSRTKAFAAEFGSALDAADEVFVLDVYAAREQPLTGISGASVAEHVTVPVRYLRDFSAVAEVVAAAAGPGDVVVTMGAGDVTLLGPEIVAALRMRADRSEPGRPGVLQ.

An ATP-binding site is contributed by 122 to 128 (GTHGKTT).

The protein belongs to the MurCDEF family.

Its subcellular location is the cytoplasm. It carries out the reaction UDP-N-acetyl-alpha-D-muramate + L-alanine + ATP = UDP-N-acetyl-alpha-D-muramoyl-L-alanine + ADP + phosphate + H(+). It functions in the pathway cell wall biogenesis; peptidoglycan biosynthesis. Cell wall formation. The protein is UDP-N-acetylmuramate--L-alanine ligase of Mycobacterium ulcerans (strain Agy99).